A 276-amino-acid polypeptide reads, in one-letter code: SKA complex subunit 1 homolog (276 aa).

Residues 48 to 78 (VDVSLTAMEAQLQAVRRRLQEEREAFPKAKK) adopt a coiled-coil conformation.

The protein belongs to the SKA1 family.

The sequence is that of SKA complex subunit 1 homolog from Oryza sativa subsp. japonica (Rice).